Reading from the N-terminus, the 370-residue chain is Cytochrome b (370 aa).

4 helical membrane-spanning segments follow: residues 25–45 (FGSM…FLAV), 69–90 (WMMQ…YIHI), 105–125 (WLSG…GYVL), and 170–190 (FFAL…LHIL). His-75 and His-89 together coordinate heme b. 2 residues coordinate heme b: His-174 and His-188. An a ubiquinone-binding site is contributed by His-193. A run of 4 helical transmembrane segments spans residues 218–238 (YKDM…VSFF), 280–300 (LGGA…PFTH), 312–332 (LMQL…WTAT), and 339–358 (FTTI…ISNP).

Belongs to the cytochrome b family. The cytochrome bc1 complex contains 3 respiratory subunits (MT-CYB, CYC1 and UQCRFS1), 2 core proteins (UQCRC1 and UQCRC2) and probably 6 low-molecular weight proteins. The cofactor is heme b.

It localises to the mitochondrion inner membrane. Functionally, component of the ubiquinol-cytochrome c reductase complex (complex III or cytochrome b-c1 complex) that is part of the mitochondrial respiratory chain. The b-c1 complex mediates electron transfer from ubiquinol to cytochrome c. Contributes to the generation of a proton gradient across the mitochondrial membrane that is then used for ATP synthesis. The protein is Cytochrome b (MT-CYB) of Chilabothrus striatus (Haitian boa constrictor).